Here is a 480-residue protein sequence, read N- to C-terminus: Sensor histidine kinase CusS (480 aa).

Residues 1-15 lie on the Cytoplasmic side of the membrane; sequence MVSKPFQRPFSLATR. Residues 16-36 form a helical membrane-spanning segment; sequence LTFFISLATIAAFFAFAWIMI. The Periplasmic portion of the chain corresponds to 37–186; it reads HSVKVHFAEQ…LHYINDLMNK (150 aa). A helical transmembrane segment spans residues 187–207; it reads LIMTASVISILIVFIVLLAVH. Residues 208–260 form the HAMP domain; that stretch reads KGHAPIRSVSRQIQNITSKDLDVRLDPQTVPIELEQLVLSFNHMIERIEDVFT. The Cytoplasmic portion of the chain corresponds to 208–480; the sequence is KGHAPIRSVS…GTRFVITLPA (273 aa). The Histidine kinase domain occupies 268-480; that stretch reads DIAHEIRTPI…GTRFVITLPA (213 aa). His271 is modified (phosphohistidine; by autocatalysis).

Post-translationally, autophosphorylated.

Its subcellular location is the cell inner membrane. The catalysed reaction is ATP + protein L-histidine = ADP + protein N-phospho-L-histidine.. Functionally, member of the two-component regulatory system CusS/CusR involved in response to copper and silver. Acts as a copper/silver ion sensor. Activates CusR by phosphorylation. The polypeptide is Sensor histidine kinase CusS (cusS) (Escherichia coli (strain K12)).